The following is a 446-amino-acid chain: MGLACAVSLSLCLIVSAILIVNARQAVQEETESAFRLAHEAVVRRLPPSHGGRDTMTEAIGLAEEIDGLRHVSARILDPEGQPLQHRAHGQLRSEASAPQWFSALMTPPLVEALVPITHYPNVLGMLRVAADPTDEIAEVWGDFSIILPVLFLAGLAMVGLAFLMTTLLTRRLQSVQAAMAQMQDGRLSVRAPDDRLTEFADLAAGVNALASHLQAEQAENDLLQARLIGSSEAERSRIALDLHDEMGPQLFALRAAVSHAQAMTADLPERPAALDETLDAIAGHALEVQRSARTAINDLRPMLLGEASLAELLAELVTGFRDVASETRVVLDVDPEVEGSSPGELAELSIYRFARESVLNAMRHGRATVVRVSLDTMPDEPGQIVVRVTDNGKGPQSGTGRPTPGFGQIGIEDRARALGATYLPPWRDNRLTHTELRMPRPCKLR.

Transmembrane regions (helical) follow at residues Met1–Val21, Trp101–Pro121, and Phe144–Leu164. Positions Thr167–Ala219 constitute an HAMP domain. The segment at Thr390–Gln409 is disordered.

It localises to the cell inner membrane. Member of the two-component regulatory system MoxY/MoxX probably involved in the regulation of the methanol dehydrogenase expression. May function as a membrane-associated protein kinase that phosphorylates MoxX in response to environmental signals. This Paracoccus denitrificans protein is Methanol utilization control sensor protein MoxY (moxY).